The primary structure comprises 891 residues: Metabotropic glutamate receptor-like protein N (891 aa).

Over 1–399 (MKLYTHKINR…FKPISKTIEY (399 aa)) the chain is Extracellular. Asn-52, Asn-85, Asn-88, Asn-125, Asn-132, Asn-224, Asn-298, Asn-312, Asn-320, Asn-325, Asn-353, Asn-363, and Asn-375 each carry an N-linked (GlcNAc...) asparagine glycan. The interval 52-91 (NNSNSNSNNNNNNNNNNNNNNNNNNNNNNNNNNNNSNNSN) is disordered. A helical transmembrane segment spans residues 400–420 (GITIVSSILIGALIIIQICII). Residues 421–433 (KYKNKPSFKSASP) are Cytoplasmic-facing. The chain crosses the membrane as a helical span at residues 434–454 (TFLIFIVIGGIFVYIGVIIWV). Over 455–461 (SGVNVFT) the chain is Extracellular. A helical membrane pass occupies residues 462 to 482 (CNAKFWLISLGLTTMIGGIVV). Topologically, residues 483 to 505 (KNFRIWLIFDNPKLYHIKITNLQ) are cytoplasmic. A helical transmembrane segment spans residues 506–526 (LLPWVLGMFLLNVFLLSLITG). Residues 527–555 (LGKLTPFKVFPNDEKFSSYEIQCEMMDGG) lie on the Extracellular side of the membrane. A helical transmembrane segment spans residues 556 to 576 (LIALYFLLGYFAIIVMIGIFV). Over 577–592 (SWKIRIVDIEEFNESK) the chain is Cytoplasmic. Residues 593 to 613 (SVAYSLYSIVFCLLIIAPLTI) traverse the membrane as a helical segment. Topologically, residues 614-625 (SKTGHNTEILCS) are extracellular. A helical membrane pass occupies residues 626–646 (GFIFIVAAIITIMFIPKFWAL). Residues 647–891 (KIYGAEGSNE…SDSNSDSIIQ (245 aa)) lie on the Cytoplasmic side of the membrane. Disordered stretches follow at residues 660–689 (QSSSSTSKRKNKSSTTNDPTNLDSISKKSS), 742–827 (NEMT…ILTP), and 869–891 (DEVIENSDSESESSDSNSDSIIQ). The span at 742–767 (NEMTYNDDPTYTEPSEQPTYTESSEQ) shows a compositional bias: polar residues. Over residues 772-782 (PRTLTATPRTN) the composition is skewed to low complexity. Over residues 783-820 (DLTTPRTNDLTTPRTNDLITPRTNDLSTPRTNDLNTPR) the composition is skewed to polar residues. The segment covering 872 to 881 (IENSDSESES) has biased composition (acidic residues). Residues 882-891 (SDSNSDSIIQ) show a composition bias toward low complexity.

The protein belongs to the G-protein coupled receptor 3 family. GABA-B receptor subfamily.

It localises to the membrane. The protein is Metabotropic glutamate receptor-like protein N (grlN) of Dictyostelium discoideum (Social amoeba).